A 261-amino-acid polypeptide reads, in one-letter code: Hydroxyethylthiazole kinase (261 aa).

Met-38 is a binding site for substrate. ATP is bound by residues Arg-114 and Thr-159. Residue Gly-186 participates in substrate binding.

Belongs to the Thz kinase family. The cofactor is Mg(2+).

It carries out the reaction 5-(2-hydroxyethyl)-4-methylthiazole + ATP = 4-methyl-5-(2-phosphooxyethyl)-thiazole + ADP + H(+). Its pathway is cofactor biosynthesis; thiamine diphosphate biosynthesis; 4-methyl-5-(2-phosphoethyl)-thiazole from 5-(2-hydroxyethyl)-4-methylthiazole: step 1/1. In terms of biological role, catalyzes the phosphorylation of the hydroxyl group of 4-methyl-5-beta-hydroxyethylthiazole (THZ). The polypeptide is Hydroxyethylthiazole kinase (Streptococcus suis (strain 05ZYH33)).